Reading from the N-terminus, the 341-residue chain is tRNA (guanine-N(7)-)-methyltransferase (341 aa).

4 residues coordinate S-adenosyl-L-methionine: Glu-75, Glu-100, Asp-127, and Asp-150. The active site involves Asp-150. Lys-154 contacts substrate. Positions 156–161 are interaction with RNA; the sequence is RHNKRR. A substrate-binding site is contributed by Asp-186.

This sequence belongs to the class I-like SAM-binding methyltransferase superfamily. TrmB family.

The catalysed reaction is guanosine(46) in tRNA + S-adenosyl-L-methionine = N(7)-methylguanosine(46) in tRNA + S-adenosyl-L-homocysteine. The protein operates within tRNA modification; N(7)-methylguanine-tRNA biosynthesis. Catalyzes the formation of N(7)-methylguanine at position 46 (m7G46) in tRNA. This chain is tRNA (guanine-N(7)-)-methyltransferase, found in Xanthomonas euvesicatoria pv. vesicatoria (strain 85-10) (Xanthomonas campestris pv. vesicatoria).